A 516-amino-acid polypeptide reads, in one-letter code: Arginyl-tRNA--protein transferase 1 (516 aa).

The segment covering 150 to 180 (IESEEKEKEKSIKKEGSKEFIHPQSIEEKLG) has biased composition (basic and acidic residues). A disordered region spans residues 150-206 (IESEEKEKEKSIKKEGSKEFIHPQSIEEKLGSGEPSHPIKVHIGPKPGKGADLSKPP).

Belongs to the R-transferase family. Monomer. Interacts with LIAT1; LIAT1 is not a substrate of ATE1, the interaction takes place in the cytoplasm and seems to increase ATE1 arginyltransferase activity. As to quaternary structure, interacts with LIAT1; has a higher affinity than the other isoforms. In terms of tissue distribution, widely expressed.

The protein resides in the nucleus. Its subcellular location is the cytoplasm. The enzyme catalyses an N-terminal L-alpha-aminoacyl-[protein] + L-arginyl-tRNA(Arg) = an N-terminal L-arginyl-L-aminoacyl-[protein] + tRNA(Arg) + H(+). Functionally, involved in the post-translational conjugation of arginine to the N-terminal aspartate or glutamate of a protein. This arginylation is required for degradation of the protein via the ubiquitin pathway. Does not arginylate cysteine residues. This is Arginyl-tRNA--protein transferase 1 from Mus musculus (Mouse).